A 281-amino-acid chain; its full sequence is NAD kinase (281 aa).

The active-site Proton acceptor is Asp-61. Residues 61-62 (DG), 134-135 (ND), Arg-145, Asp-164, 175-180 (TAYSLS), and Gln-234 contribute to the NAD(+) site.

It belongs to the NAD kinase family. A divalent metal cation is required as a cofactor.

It is found in the cytoplasm. The enzyme catalyses NAD(+) + ATP = ADP + NADP(+) + H(+). Involved in the regulation of the intracellular balance of NAD and NADP, and is a key enzyme in the biosynthesis of NADP. Catalyzes specifically the phosphorylation on 2'-hydroxyl of the adenosine moiety of NAD to yield NADP. This chain is NAD kinase, found in Clostridium botulinum (strain 657 / Type Ba4).